The sequence spans 689 residues: MNFENLLIELGTEELPPKSLRKLAESFLANFTEELTKADLAFSSAVWYAAPRRLAINVTELALAQADKVVEKRGPAVSSAFDAEGKPTKAAEGWARGNGITVEQAERLVTDKGEWLVHNAKVEGVETKSLIAAMAQRALDKLPIPKPMRWGNNKTQFIRPVHTATILLGSELIEGELLGIKSARTVRGHRFMGLKQFELAHADHYLADLKEKGKVIADYESRKALIKADAEKAAAKIGGTADIEDSLLEEVASLVEWPVVLTASFEEKFLSVPSEALVYTMKGDQKYFPVFDNAGKLLPNFIFVANIESKDPAQIISGNEKVVRPRLADAEFFFNTDKKHTLESRLPSLETVLFQQQLGTLKDKVNRISALAAFIAEQTGANAVDAARAGLLSKTDLMTNMVMEFTDTQGTMGMHYARLDGETEAVAVAMEEQYKPKFSGDTVPSAGVSCAVALADKLDTLVGIFGIGQAPKGAADPFALRRAAIGVLRIIVENKLPLDLVTLIAKAQELHGTHLSNANASDEVLEFLMARFRAWYQDKGIGVDVILAVLARRPTRPADFDSRINAVSHFRSLEASGALAAANKRVSNILAKVEGALPTTIDASLLTEAAEQALAAKLNELQPQLAPLFANADYQQALTLLAGLRESVDQFFEDVMVMADDEALKNNRLALLNNLREQFLHVADISLLQ.

Belongs to the class-II aminoacyl-tRNA synthetase family. Tetramer of two alpha and two beta subunits.

It is found in the cytoplasm. The enzyme catalyses tRNA(Gly) + glycine + ATP = glycyl-tRNA(Gly) + AMP + diphosphate. The protein is Glycine--tRNA ligase beta subunit of Shewanella putrefaciens (strain CN-32 / ATCC BAA-453).